The primary structure comprises 462 residues: Argininosuccinate lyase (462 aa).

Belongs to the lyase 1 family. Argininosuccinate lyase subfamily.

The protein resides in the cytoplasm. It catalyses the reaction 2-(N(omega)-L-arginino)succinate = fumarate + L-arginine. Its pathway is amino-acid biosynthesis; L-arginine biosynthesis; L-arginine from L-ornithine and carbamoyl phosphate: step 3/3. In Leuconostoc citreum (strain KM20), this protein is Argininosuccinate lyase.